A 426-amino-acid polypeptide reads, in one-letter code: Enolase (426 aa).

(2R)-2-phosphoglycerate is bound at residue Q163. E205 serves as the catalytic Proton donor. Mg(2+)-binding residues include D242, E286, and D313. Positions 338, 367, 368, and 389 each coordinate (2R)-2-phosphoglycerate. Catalysis depends on K338, which acts as the Proton acceptor.

This sequence belongs to the enolase family. The cofactor is Mg(2+).

It localises to the cytoplasm. The protein localises to the secreted. Its subcellular location is the cell surface. The catalysed reaction is (2R)-2-phosphoglycerate = phosphoenolpyruvate + H2O. Its pathway is carbohydrate degradation; glycolysis; pyruvate from D-glyceraldehyde 3-phosphate: step 4/5. Catalyzes the reversible conversion of 2-phosphoglycerate (2-PG) into phosphoenolpyruvate (PEP). It is essential for the degradation of carbohydrates via glycolysis. In Helicobacter pylori (strain ATCC 700392 / 26695) (Campylobacter pylori), this protein is Enolase.